We begin with the raw amino-acid sequence, 201 residues long: Recombination protein RecR (201 aa).

A C4-type zinc finger spans residues 57–72 (CADCRTFTEQEHCTIC). In terms of domain architecture, Toprim spans 81 to 176 (GQICVVESPA…LASRIAHGVP (96 aa)).

This sequence belongs to the RecR family.

Functionally, may play a role in DNA repair. It seems to be involved in an RecBC-independent recombinational process of DNA repair. It may act with RecF and RecO. This chain is Recombination protein RecR, found in Yersinia enterocolitica serotype O:8 / biotype 1B (strain NCTC 13174 / 8081).